A 426-amino-acid polypeptide reads, in one-letter code: Histidine--tRNA ligase 1 (426 aa).

Belongs to the class-II aminoacyl-tRNA synthetase family. As to quaternary structure, homodimer.

It is found in the cytoplasm. It catalyses the reaction tRNA(His) + L-histidine + ATP = L-histidyl-tRNA(His) + AMP + diphosphate + H(+). The protein is Histidine--tRNA ligase 1 of Shouchella clausii (strain KSM-K16) (Alkalihalobacillus clausii).